Consider the following 283-residue polypeptide: Gap junction beta-1 protein (283 aa).

Residues 1 to 22 (MNWTGLYTLLSGVNRHSTAIGR) lie on the Cytoplasmic side of the membrane. Residues 23-45 (VWLSVIFIFRIMVLVVAAESVWG) traverse the membrane as a helical segment. Over 46–75 (DEKSSFICNTLQPGCNSVCYDQFFPISHVR) the chain is Extracellular. A helical transmembrane segment spans residues 76–95 (LWSLQLILVSTPALLVAMHV). The Cytoplasmic portion of the chain corresponds to 96–130 (AHQQHIEKKMLRLEGHGDPLHLEEVKRHKVHISGT). Residues 131 to 153 (LWWTYVISVVFRLLFEAVFMYVF) form a helical membrane-spanning segment. Residues 154-191 (YLLYPGYAMVRLVKCDVYPCPNTVDCFVSRPTEKTVFT) are Extracellular-facing. The chain crosses the membrane as a helical span at residues 192–214 (VFMLAASGICIILNVAEVVYLII). The Cytoplasmic portion of the chain corresponds to 215-283 (RACARRAQRR…AEKSDRCSAC (69 aa)). Phosphoserine is present on residues serine 233, serine 258, serine 266, and serine 277.

Belongs to the connexin family. Beta-type (group I) subfamily. In terms of assembly, a connexon is composed of a hexamer of connexins. Interacts with CNST.

Its subcellular location is the cell membrane. The protein localises to the cell junction. It localises to the gap junction. In terms of biological role, one gap junction consists of a cluster of closely packed pairs of transmembrane channels, the connexons, through which materials of low MW diffuse from one cell to a neighboring cell. The chain is Gap junction beta-1 protein (GJB1) from Homo sapiens (Human).